Here is a 345-residue protein sequence, read N- to C-terminus: Phosphate acyltransferase (345 aa).

The protein belongs to the PlsX family. As to quaternary structure, homodimer. Probably interacts with PlsY.

The protein localises to the cytoplasm. It catalyses the reaction a fatty acyl-[ACP] + phosphate = an acyl phosphate + holo-[ACP]. Its pathway is lipid metabolism; phospholipid metabolism. Its function is as follows. Catalyzes the reversible formation of acyl-phosphate (acyl-PO(4)) from acyl-[acyl-carrier-protein] (acyl-ACP). This enzyme utilizes acyl-ACP as fatty acyl donor, but not acyl-CoA. The protein is Phosphate acyltransferase of Thermodesulfovibrio yellowstonii (strain ATCC 51303 / DSM 11347 / YP87).